A 471-amino-acid polypeptide reads, in one-letter code: Alkaline phosphatase (471 aa).

Positions 1–21 (MKQSTIALALLPLLFTPVTKA) are cleaved as a signal peptide. Residue Asp73 participates in Mg(2+) binding. Residue Asp73 participates in Zn(2+) binding. The active-site Phosphoserine intermediate is the Ser124. Residues Asp175 and Thr177 each coordinate Mg(2+). 2 disulfides stabilise this stretch: Cys190–Cys200 and Cys308–Cys358. Glu344 provides a ligand contact to Mg(2+). The Zn(2+) site is built by Asp349, His353, Asp391, His392, and His434.

It belongs to the alkaline phosphatase family. In terms of assembly, isozymes 1 and 3 are a dimer of identical chains, isozyme 2 is a dimer of heterogeneous chains, one of each of the subunits from isozymes 1 and 3. Mg(2+) serves as cofactor. Zn(2+) is required as a cofactor.

The protein resides in the periplasm. It carries out the reaction a phosphate monoester + H2O = an alcohol + phosphate. This chain is Alkaline phosphatase (phoA), found in Escherichia coli (strain K12).